The chain runs to 330 residues: Probable pectinesterase 55 (330 aa).

Residues 1–24 (MGTHRIILGLAALCCFCLPHLIEA) form the signal peptide. 2 N-linked (GlcNAc...) asparagine glycosylation sites follow: asparagine 38 and asparagine 52. Catalysis depends on aspartate 161, which acts as the Proton donor. Aspartate 182 acts as the Nucleophile in catalysis. The substrate site is built by arginine 243 and tryptophan 245. 2 N-linked (GlcNAc...) asparagine glycosylation sites follow: asparagine 257 and asparagine 292.

Belongs to the pectinesterase family.

It is found in the secreted. Its subcellular location is the cell wall. It catalyses the reaction [(1-&gt;4)-alpha-D-galacturonosyl methyl ester](n) + n H2O = [(1-&gt;4)-alpha-D-galacturonosyl](n) + n methanol + n H(+). It functions in the pathway glycan metabolism; pectin degradation; 2-dehydro-3-deoxy-D-gluconate from pectin: step 1/5. Functionally, acts in the modification of cell walls via demethylesterification of cell wall pectin. In Arabidopsis thaliana (Mouse-ear cress), this protein is Probable pectinesterase 55 (PME55).